The sequence spans 505 residues: Deoxyguanosinetriphosphate triphosphohydrolase (505 aa).

Positions 66–273 constitute an HD domain; it reads RLTHSMEVQQ…MEAADDISYC (208 aa).

Belongs to the dGTPase family. Type 1 subfamily. Homotetramer. Mg(2+) is required as a cofactor.

It carries out the reaction dGTP + H2O = 2'-deoxyguanosine + triphosphate + H(+). In terms of biological role, dGTPase preferentially hydrolyzes dGTP over the other canonical NTPs. This is Deoxyguanosinetriphosphate triphosphohydrolase from Escherichia fergusonii (strain ATCC 35469 / DSM 13698 / CCUG 18766 / IAM 14443 / JCM 21226 / LMG 7866 / NBRC 102419 / NCTC 12128 / CDC 0568-73).